We begin with the raw amino-acid sequence, 325 residues long: Casein kinase I isoform alpha (325 aa).

Position 2 is an N-acetylalanine (Ala2). Ser4 carries the post-translational modification Phosphoserine. Position 8 is an N6-acetyllysine (Lys8). In terms of domain architecture, Protein kinase spans 17–285 (YKLVRKIGSG…YLRQLFRILF (269 aa)). Residues 23 to 31 (IGSGSFGDI) and Lys46 contribute to the ATP site. Asp136 (proton acceptor) is an active-site residue. Residue Ile156 is modified to Phosphoserine.

It belongs to the protein kinase superfamily. CK1 Ser/Thr protein kinase family. Casein kinase I subfamily. As to quaternary structure, interacts with the Axin complex. Interacts with TUT1, leading to TUT1 phosphorylation. Interacts with FAM83A, FAM83B, FAM83C, FAM83D, FAM83E, FAM83F, FAM83G and FAM83H (via DUF1669). Interaction with FAM83H recruits CSNK1A1 to keratin filaments. In terms of processing, phosphorylated by MTOR in response to mitogenic stimulation, leading to its activation.

The protein resides in the cytoplasm. The protein localises to the cytoskeleton. It localises to the microtubule organizing center. It is found in the centrosome. Its subcellular location is the chromosome. The protein resides in the centromere. The protein localises to the kinetochore. It localises to the nucleus speckle. It is found in the cilium basal body. Its subcellular location is the spindle. The catalysed reaction is L-seryl-[protein] + ATP = O-phospho-L-seryl-[protein] + ADP + H(+). It carries out the reaction L-threonyl-[protein] + ATP = O-phospho-L-threonyl-[protein] + ADP + H(+). In terms of biological role, casein kinases are operationally defined by their preferential utilization of acidic proteins such as caseins as substrates. Can phosphorylate a large number of proteins. Participates in Wnt signaling. Phosphorylates CTNNB1 at 'Ser-45'. May phosphorylate PER1 and PER2. May play a role in segregating chromosomes during mitosis. May play a role in keratin cytoskeleton disassembly and thereby, it may regulate epithelial cell migration. Acts as a positive regulator of mTORC1 and mTORC2 signaling in response to nutrients by mediating phosphorylation of DEPTOR inhibitor. Acts as an inhibitor of NLRP3 inflammasome assembly by mediating phosphorylation of NLRP3. This is Casein kinase I isoform alpha (Csnk1a1) from Rattus norvegicus (Rat).